Reading from the N-terminus, the 471-residue chain is Glutamate--tRNA ligase 1 (471 aa).

The 'HIGH' region signature appears at 10–20 (PSPTGFLHIGG). Residues 113–140 (ARKEGRPPRYDGRWRDRDPSEAPKDRDP) form a disordered region. The 'KMSKS' region motif lies at 239 to 243 (KLSKR). Lysine 242 contributes to the ATP binding site.

Belongs to the class-I aminoacyl-tRNA synthetase family. Glutamate--tRNA ligase type 1 subfamily. Monomer.

Its subcellular location is the cytoplasm. It carries out the reaction tRNA(Glu) + L-glutamate + ATP = L-glutamyl-tRNA(Glu) + AMP + diphosphate. Functionally, catalyzes the attachment of glutamate to tRNA(Glu) in a two-step reaction: glutamate is first activated by ATP to form Glu-AMP and then transferred to the acceptor end of tRNA(Glu). The polypeptide is Glutamate--tRNA ligase 1 (Xanthobacter autotrophicus (strain ATCC BAA-1158 / Py2)).